Here is an 857-residue protein sequence, read N- to C-terminus: DNA mismatch repair protein MutS (857 aa).

621 to 628 (GPNMGGKS) provides a ligand contact to ATP.

It belongs to the DNA mismatch repair MutS family.

In terms of biological role, this protein is involved in the repair of mismatches in DNA. It is possible that it carries out the mismatch recognition step. This protein has a weak ATPase activity. The chain is DNA mismatch repair protein MutS from Francisella tularensis subsp. tularensis (strain SCHU S4 / Schu 4).